The following is a 377-amino-acid chain: Molybdenum import ATP-binding protein ModC (377 aa).

An ABC transporter domain is found at 4-240 (IAPRSIRGEF…PALPLATARD (237 aa)). 38-45 (GPSGCGKS) lines the ATP pocket. Positions 299–369 (RTSILNILPA…IKGVALAPER (71 aa)) constitute a Mop domain.

The protein belongs to the ABC transporter superfamily. Molybdate importer (TC 3.A.1.8) family. In terms of assembly, the complex is composed of two ATP-binding proteins (ModC), two transmembrane proteins (ModB) and a solute-binding protein (ModA).

It localises to the cell inner membrane. It catalyses the reaction molybdate(out) + ATP + H2O = molybdate(in) + ADP + phosphate + H(+). Functionally, part of the ABC transporter complex ModABC involved in molybdenum import. Responsible for energy coupling to the transport system. The protein is Molybdenum import ATP-binding protein ModC of Rhodopseudomonas palustris (strain HaA2).